Here is a 96-residue protein sequence, read N- to C-terminus: YcgL domain-containing protein VS_0884 (96 aa).

The YcgL domain maps to 1 to 84 (MLCSIYKSSK…PPVNELELHK (84 aa)).

The chain is YcgL domain-containing protein VS_0884 from Vibrio atlanticus (strain LGP32) (Vibrio splendidus (strain Mel32)).